Reading from the N-terminus, the 434-residue chain is 3-phosphoshikimate 1-carboxyvinyltransferase (434 aa).

3-phosphoshikimate contacts are provided by Lys22, Ser23, and Arg27. Residue Lys22 participates in phosphoenolpyruvate binding. Phosphoenolpyruvate is bound by residues Gly93 and Arg121. 3-phosphoshikimate contacts are provided by Ser168, Ser169, Gln170, Ser199, Asp320, and Lys347. Gln170 is a phosphoenolpyruvate binding site. Asp320 (proton acceptor) is an active-site residue. Phosphoenolpyruvate is bound by residues Arg351, Arg395, and Lys420.

Belongs to the EPSP synthase family. In terms of assembly, monomer.

It localises to the cytoplasm. It catalyses the reaction 3-phosphoshikimate + phosphoenolpyruvate = 5-O-(1-carboxyvinyl)-3-phosphoshikimate + phosphate. It functions in the pathway metabolic intermediate biosynthesis; chorismate biosynthesis; chorismate from D-erythrose 4-phosphate and phosphoenolpyruvate: step 6/7. Its function is as follows. Catalyzes the transfer of the enolpyruvyl moiety of phosphoenolpyruvate (PEP) to the 5-hydroxyl of shikimate-3-phosphate (S3P) to produce enolpyruvyl shikimate-3-phosphate and inorganic phosphate. The protein is 3-phosphoshikimate 1-carboxyvinyltransferase of Cupriavidus taiwanensis (strain DSM 17343 / BCRC 17206 / CCUG 44338 / CIP 107171 / LMG 19424 / R1) (Ralstonia taiwanensis (strain LMG 19424)).